An 89-amino-acid polypeptide reads, in one-letter code: Small ribosomal subunit protein uS15 (89 aa).

The protein belongs to the universal ribosomal protein uS15 family. As to quaternary structure, part of the 30S ribosomal subunit. Forms a bridge to the 50S subunit in the 70S ribosome, contacting the 23S rRNA.

Functionally, one of the primary rRNA binding proteins, it binds directly to 16S rRNA where it helps nucleate assembly of the platform of the 30S subunit by binding and bridging several RNA helices of the 16S rRNA. Its function is as follows. Forms an intersubunit bridge (bridge B4) with the 23S rRNA of the 50S subunit in the ribosome. In Carboxydothermus hydrogenoformans (strain ATCC BAA-161 / DSM 6008 / Z-2901), this protein is Small ribosomal subunit protein uS15.